A 271-amino-acid polypeptide reads, in one-letter code: 4-hydroxy-tetrahydrodipicolinate reductase (271 aa).

Residues 11–16 (GAAGRM), Glu-37, 102–104 (GTT), and 126–129 (AGNM) contribute to the NAD(+) site. Catalysis depends on His-159, which acts as the Proton donor/acceptor. His-160 lines the (S)-2,3,4,5-tetrahydrodipicolinate pocket. The active-site Proton donor is Lys-163. 169–170 (GT) provides a ligand contact to (S)-2,3,4,5-tetrahydrodipicolinate.

The protein belongs to the DapB family.

Its subcellular location is the cytoplasm. The catalysed reaction is (S)-2,3,4,5-tetrahydrodipicolinate + NAD(+) + H2O = (2S,4S)-4-hydroxy-2,3,4,5-tetrahydrodipicolinate + NADH + H(+). It catalyses the reaction (S)-2,3,4,5-tetrahydrodipicolinate + NADP(+) + H2O = (2S,4S)-4-hydroxy-2,3,4,5-tetrahydrodipicolinate + NADPH + H(+). The protein operates within amino-acid biosynthesis; L-lysine biosynthesis via DAP pathway; (S)-tetrahydrodipicolinate from L-aspartate: step 4/4. Its function is as follows. Catalyzes the conversion of 4-hydroxy-tetrahydrodipicolinate (HTPA) to tetrahydrodipicolinate. In Parvibaculum lavamentivorans (strain DS-1 / DSM 13023 / NCIMB 13966), this protein is 4-hydroxy-tetrahydrodipicolinate reductase.